Consider the following 313-residue polypeptide: tRNA dimethylallyltransferase (313 aa).

Residue 11-18 (GPTAAGKS) participates in ATP binding. 13–18 (TAAGKS) contributes to the substrate binding site. 3 interaction with substrate tRNA regions span residues 36-39 (DSAT), 160-164 (QRIQR), and 244-249 (RCVGYR).

It belongs to the IPP transferase family. As to quaternary structure, monomer. Requires Mg(2+) as cofactor.

It carries out the reaction adenosine(37) in tRNA + dimethylallyl diphosphate = N(6)-dimethylallyladenosine(37) in tRNA + diphosphate. Functionally, catalyzes the transfer of a dimethylallyl group onto the adenine at position 37 in tRNAs that read codons beginning with uridine, leading to the formation of N6-(dimethylallyl)adenosine (i(6)A). The sequence is that of tRNA dimethylallyltransferase from Bordetella parapertussis (strain 12822 / ATCC BAA-587 / NCTC 13253).